We begin with the raw amino-acid sequence, 441 residues long: BTB/POZ domain-containing protein At4g30940 (441 aa).

Positions 6-74 (DRIKFNVGGR…LRTGDLNIPP (69 aa)) constitute a BTB domain.

Its pathway is protein modification; protein ubiquitination. Functionally, may act as a substrate-specific adapter of an E3 ubiquitin-protein ligase complex (CUL3-RBX1-BTB) which mediates the ubiquitination and subsequent proteasomal degradation of target proteins. This Arabidopsis thaliana (Mouse-ear cress) protein is BTB/POZ domain-containing protein At4g30940.